The primary structure comprises 179 residues: Segregation and condensation protein B (179 aa).

This sequence belongs to the ScpB family. In terms of assembly, homodimer. Homodimerization may be required to stabilize the binding of ScpA to the Smc head domains. Component of a cohesin-like complex composed of ScpA, ScpB and the Smc homodimer, in which ScpA and ScpB bind to the head domain of Smc. The presence of the three proteins is required for the association of the complex with DNA.

The protein localises to the cytoplasm. Functionally, participates in chromosomal partition during cell division. May act via the formation of a condensin-like complex containing Smc and ScpA that pull DNA away from mid-cell into both cell halves. The protein is Segregation and condensation protein B of Staphylococcus haemolyticus (strain JCSC1435).